Consider the following 808-residue polypeptide: Putative minor structural protein VP5 (808 aa).

Its subcellular location is the virion. The chain is Putative minor structural protein VP5 from Rice ragged stunt virus (isolate Thailand) (RRSV).